Here is a 214-residue protein sequence, read N- to C-terminus: Holliday junction branch migration complex subunit RuvA (214 aa).

Residues 1-68 (MIGFLQGKVL…QPKPVLIGFD (68 aa)) are domain I. Residues 69–146 (SAEEKDFFQL…RFLLAADEAG (78 aa)) are domain II. Residues 147 to 160 (AGDGVSKTGTPSLP) are flexible linker. Residues 161-214 (IQKAIDQVVDVLVQQLGHTPSAAKMMVAQALDRDPEIMTPEALFDEVYKGDVDA) are domain III.

The protein belongs to the RuvA family. As to quaternary structure, homotetramer. Forms an RuvA(8)-RuvB(12)-Holliday junction (HJ) complex. HJ DNA is sandwiched between 2 RuvA tetramers; dsDNA enters through RuvA and exits via RuvB. An RuvB hexamer assembles on each DNA strand where it exits the tetramer. Each RuvB hexamer is contacted by two RuvA subunits (via domain III) on 2 adjacent RuvB subunits; this complex drives branch migration. In the full resolvosome a probable DNA-RuvA(4)-RuvB(12)-RuvC(2) complex forms which resolves the HJ.

It localises to the cytoplasm. In terms of biological role, the RuvA-RuvB-RuvC complex processes Holliday junction (HJ) DNA during genetic recombination and DNA repair, while the RuvA-RuvB complex plays an important role in the rescue of blocked DNA replication forks via replication fork reversal (RFR). RuvA specifically binds to HJ cruciform DNA, conferring on it an open structure. The RuvB hexamer acts as an ATP-dependent pump, pulling dsDNA into and through the RuvAB complex. HJ branch migration allows RuvC to scan DNA until it finds its consensus sequence, where it cleaves and resolves the cruciform DNA. The sequence is that of Holliday junction branch migration complex subunit RuvA from Desulforapulum autotrophicum (strain ATCC 43914 / DSM 3382 / VKM B-1955 / HRM2) (Desulfobacterium autotrophicum).